The chain runs to 56 residues: Large ribosomal subunit protein bL32c (56 aa).

This sequence belongs to the bacterial ribosomal protein bL32 family.

The protein resides in the plastid. The protein localises to the chloroplast. This chain is Large ribosomal subunit protein bL32c, found in Tupiella akineta (Green alga).